A 265-amino-acid chain; its full sequence is Regulator of calcineurin 2 (265 aa).

Ser-104 and Ser-110 each carry phosphoserine. Disordered regions lie at residues Leu-127–Ala-213 and Glu-242–His-265. Position 132 is a phosphothreonine (Thr-132). 2 stretches are compositionally biased toward low complexity: residues Ser-141–Pro-161 and Leu-182–Leu-202. Phosphoserine occurs at positions 152, 157, 160, 183, 187, 193, 201, and 255.

Phosphorylation of Ser-152 and Ser-160 is induced 2-fold in response to mating pheromone.

The protein resides in the cytoplasm. This chain is Regulator of calcineurin 2 (RCN2), found in Saccharomyces cerevisiae (strain ATCC 204508 / S288c) (Baker's yeast).